An 81-amino-acid chain; its full sequence is MKLTCMMIVAVLFLTAWTFVTAVPHSSNALENLYLKARHEMENPEASKLNTRDDCEPPGNFCGMIKIGPPCCSGWCFFACA.

The N-terminal stretch at 1 to 22 (MKLTCMMIVAVLFLTAWTFVTA) is a signal peptide. Positions 23–52 (VPHSSNALENLYLKARHEMENPEASKLNTR) are excised as a propeptide. Intrachain disulfides connect Cys-55-Cys-72, Cys-62-Cys-76, and Cys-71-Cys-80.

It belongs to the conotoxin O1 superfamily. In terms of tissue distribution, expressed by the venom duct.

It is found in the secreted. In terms of biological role, omega-conotoxins act at presynaptic membranes, they bind and block voltage-gated calcium channels (Cav). The chain is Omega-conotoxin-like TxMKLT1-0223 from Conus textile (Cloth-of-gold cone).